Consider the following 478-residue polypeptide: tRNA modification GTPase MnmE (478 aa).

Residues Arg-36, Glu-94, and Lys-133 each contribute to the (6S)-5-formyl-5,6,7,8-tetrahydrofolate site. In terms of domain architecture, TrmE-type G spans 230-402 (GIHVVLAGRP…LVETLCAKVG (173 aa)). Asn-240 contributes to the K(+) binding site. Residues 240–245 (NAGKSS), 259–265 (TDVAGTT), and 284–287 (DTAG) contribute to the GTP site. Ser-244 contributes to the Mg(2+) binding site. Positions 259, 261, and 264 each coordinate K(+). Residue Thr-265 participates in Mg(2+) binding. Lys-478 is a binding site for (6S)-5-formyl-5,6,7,8-tetrahydrofolate.

The protein belongs to the TRAFAC class TrmE-Era-EngA-EngB-Septin-like GTPase superfamily. TrmE GTPase family. In terms of assembly, homodimer. Heterotetramer of two MnmE and two MnmG subunits. The cofactor is K(+).

It is found in the cytoplasm. Its function is as follows. Exhibits a very high intrinsic GTPase hydrolysis rate. Involved in the addition of a carboxymethylaminomethyl (cmnm) group at the wobble position (U34) of certain tRNAs, forming tRNA-cmnm(5)s(2)U34. The chain is tRNA modification GTPase MnmE from Psychrobacter cryohalolentis (strain ATCC BAA-1226 / DSM 17306 / VKM B-2378 / K5).